A 55-amino-acid polypeptide reads, in one-letter code: Cicadin (55 aa).

The span at 1-26 shows a compositional bias: basic and acidic residues; the sequence is NEYHGFVDKANNENKRKKQQGRDDFV. Residues 1–39 are disordered; sequence NEYHGFVDKANNENKRKKQQGRDDFVVKPNNFANRRRKD.

Possesses antifungal activity against B.cinerea, M.arachidicola, F.oxysporum, R.solani and C.comatus. Functionally, suppresses the activity of HIV-1 reverse transcriptase and stimulates the proliferation of murine splenocytes. This Cicada flammata protein is Cicadin.